A 663-amino-acid chain; its full sequence is Zinc finger protein 44 (663 aa).

The KRAB domain occupies 52–138 (VAFEDVAVNF…GETLSQIRNS (87 aa)). A C2H2-type 1; atypical zinc finger spans residues 189–211 (YTHKQCGKGLSYRHSFQTCERPH). Residues 217–239 (YDCKECGKTFSSPGNLRRHMVVK) form a C2H2-type 2; degenerate zinc finger. C2H2-type zinc fingers lie at residues 245-267 (YKCE…ERTH), 273-295 (YECK…EKIH), 301-323 (YECK…ERTH), 329-351 (YKCK…ERIH), 357-379 (YTCK…MIMH), 385-407 (HKCK…EGTH), 413-435 (YECK…MMAH), 441-463 (HKCT…ERTH), 469-491 (YECK…ETTH), 497-518 (YKCK…ETTH), 524-546 (YECK…ERTH), 552-574 (YECQ…ERTH), 580-602 (YECK…ERTH), 608-630 (YECK…ERTH), and 636-658 (YECK…KRTH).

This sequence belongs to the krueppel C2H2-type zinc-finger protein family.

It localises to the nucleus. Its function is as follows. May be involved in transcriptional regulation. In Homo sapiens (Human), this protein is Zinc finger protein 44 (ZNF44).